A 341-amino-acid chain; its full sequence is MSSITLFGAGSWGTAMSVHLASAGRDVVLWARRPEVADEIRRTSHNPTYLPELLIPSSVYITTDLEKAAEASDLWGMAVPSQQLRGRAEHLRPHAHSGVRLVALSKGIENETLLTMSQVLDDVFESVPSDQIGALYGPSHAEEVAEGRPTAVVAAAPDEGEARHIQKVFMTERLRVYMNTDVLGVEIGGSAKNVLAIAAGIADGVSYGDNAKAALVTRGLAEIRRLGQALGADPQTFAGLAGIGDLVVTCMSPHSRNRYLGEQISTGKSLDEVLNDMAMVAEGVRTTRSVYNLAKHHGVEMPITEAVHAILFDDKSPRKMVKRLMTRSAKHENWLPTTLQQ.

Residues S11, W12, R32, R33, and K106 each contribute to the NADPH site. K106, G137, and S139 together coordinate sn-glycerol 3-phosphate. A141 lines the NADPH pocket. Sn-glycerol 3-phosphate-binding residues include K192, D245, S255, R256, and N257. Residue K192 is the Proton acceptor of the active site. Residue R256 coordinates NADPH. Residues V280 and E282 each contribute to the NADPH site.

Belongs to the NAD-dependent glycerol-3-phosphate dehydrogenase family.

The protein localises to the cytoplasm. The catalysed reaction is sn-glycerol 3-phosphate + NAD(+) = dihydroxyacetone phosphate + NADH + H(+). It catalyses the reaction sn-glycerol 3-phosphate + NADP(+) = dihydroxyacetone phosphate + NADPH + H(+). Its pathway is membrane lipid metabolism; glycerophospholipid metabolism. Functionally, catalyzes the reduction of the glycolytic intermediate dihydroxyacetone phosphate (DHAP) to sn-glycerol 3-phosphate (G3P), the key precursor for phospholipid synthesis. This is Glycerol-3-phosphate dehydrogenase [NAD(P)+] 1 from Salinibacter ruber (strain DSM 13855 / M31).